A 619-amino-acid chain; its full sequence is Sodium-dependent dopamine transporter (619 aa).

The Cytoplasmic segment spans residues 1–56; the sequence is MSKSKCSVGPMSSVVAPAKEPNAVGPREVELILVKEQNGVQLTNSTLINPPQTPVE. A discontinuously helical transmembrane segment spans residues 57–95; the sequence is VQERETWSKKIDFLLSVIGFAVDLANVWRFPYLCYKNGG. Gly75, Ala77, Val78, Asp79, and Asn82 together coordinate Na(+). Asp79 is a binding site for dopamine. 2 helical membrane-spanning segments follow: residues 96–127 and 128–171; these read GAFL…NREG and AAGV…FSSF. Ser149 and Gly153 together coordinate dopamine. Topologically, residues 172–235 are extracellular; it reads TMDLPWIHCN…SRGIDDLGPP (64 aa). The cysteines at positions 180 and 189 are disulfide-linked. N-linked (GlcNAc...) asparagine glycosylation is found at Asn181, Asn188, Asn196, and Asn204. 2 helical membrane-spanning segments follow: residues 236–255 and 256–286; these read RWQL…FSLW and KGVK…GVTL. Over 287-305 the chain is Extracellular; it reads PGAMDGIRAYLSVDFYRLC. A discontinuously helical transmembrane segment spans residues 306 to 334; that stretch reads EASVWIDAATQVCFSLGVGFGVLIAFSSY. Gln316 is a chloride binding site. Position 319 (Phe319) interacts with dopamine. Na(+)-binding residues include Ser320 and Asn352. Ser320 serves as a coordination point for chloride. The helical transmembrane segment at 335-375 threads the bilayer; it reads NKFTNNCYRDAIITTSINSLTSFSSGFVVFSFLGYMAQKHN. Chloride is bound at residue Ser356. Over 376-399 the chain is Extracellular; that stretch reads VPIRDVATDGPGLIFIIYPEAIAT. The next 3 membrane-spanning stretches (helical) occupy residues 400 to 441, 442 to 465, and 466 to 498; these read LPLS…QLLH, RHRE…CVTN, and GGIY…AWFY. Na(+)-binding residues include Leu417, Asp420, and Ser421. Residues Ser421 and Ala422 each contribute to the dopamine site. Residues 499 to 515 are Cytoplasmic-facing; that stretch reads GVQQFSDDIKQMTGQRP. A helical transmembrane segment spans residues 516–541; the sequence is NLYWRLCWKLVSPCFLLYVVVVSIVT. At 542 to 552 the chain is on the extracellular side; that stretch reads FRPPHYGAYIF. Residues 553-582 form a helical membrane-spanning segment; it reads PDWANALGWIIATSSMAMVPIYATYKFCSL. The tract at residues 560 to 589 is interaction with TGFB1I1; that stretch reads GWIIATSSMAMVPIYATYKFCSLPGSFREK. Topologically, residues 583–619 are cytoplasmic; the sequence is PGSFREKLAYAITPEKDRQLVDRGEVRQFTLRHWLLV.

The protein belongs to the sodium:neurotransmitter symporter (SNF) (TC 2.A.22) family. SLC6A3 subfamily. Monomer. Homooligomer; disulfide-linked. Interacts with PRKCABP and TGFB1I1. Interacts (via N-terminus) with SYNGR3 (via N-terminus). Interacts with SLC18A2. Interacts with TOR1A (ATP-bound); TOR1A regulates SLC6A3 subcellular location. Interacts with alpha-synuclein/SNCA. Interacts with SEPTIN4. As to expression, found in the substantia nigra and ventral tegmental dopamine neurons, in fibers of the medial forebrain bundle ascending into the striatum, and within dense fiber networks and varicosities in the dorsal and ventral striatum (at protein level). Lower expression in the cortex (at protein level). Absent from the corpus callosum. Expressed throughout the retina at postnatal day 8.

It localises to the cell membrane. The protein localises to the cell projection. The protein resides in the neuron projection. Its subcellular location is the axon. It catalyses the reaction dopamine(out) + chloride(out) + Na(+)(out) = dopamine(in) + chloride(in) + Na(+)(in). It carries out the reaction (R)-noradrenaline(out) + chloride(out) + Na(+)(out) = (R)-noradrenaline(in) + chloride(in) + Na(+)(in). The enzyme catalyses dopamine(out) + chloride(out) + 2 Na(+)(out) = dopamine(in) + chloride(in) + 2 Na(+)(in). With respect to regulation, inhibited by amphetamine, bupropion, cocaine and ritalin. Inhibited by zinc ions. In terms of biological role, mediates sodium- and chloride-dependent transport of dopamine. Also mediates sodium- and chloride-dependent transport of norepinephrine (also known as noradrenaline). Regulator of light-dependent retinal hyaloid vessel regression, downstream of OPN5 signaling. This is Sodium-dependent dopamine transporter (Slc6a3) from Mus musculus (Mouse).